Consider the following 195-residue polypeptide: Putative NADH dehydrogenase/NAD(P)H nitroreductase CC_0061 (195 aa).

This sequence belongs to the nitroreductase family. HadB/RutE subfamily. Requires FMN as cofactor.

This Caulobacter vibrioides (strain ATCC 19089 / CIP 103742 / CB 15) (Caulobacter crescentus) protein is Putative NADH dehydrogenase/NAD(P)H nitroreductase CC_0061.